We begin with the raw amino-acid sequence, 319 residues long: Acetyl esterase (319 aa).

The Involved in the stabilization of the negatively charged intermediate by the formation of the oxyanion hole signature appears at 91 to 93 (HGG). Catalysis depends on residues Ser165, Asp262, and His292.

This sequence belongs to the 'GDXG' lipolytic enzyme family. As to quaternary structure, homodimer. Interacts with MalT and MelA.

The protein resides in the cytoplasm. Its function is as follows. Displays esterase activity towards short chain fatty esters (acyl chain length of up to 8 carbons). Able to hydrolyze triacetylglycerol (triacetin) and tributyrylglycerol (tributyrin), but not trioleylglycerol (triolein) or cholesterol oleate. Negatively regulates MalT activity by antagonizing maltotriose binding. Inhibits MelA galactosidase activity. This chain is Acetyl esterase, found in Escherichia coli O17:K52:H18 (strain UMN026 / ExPEC).